Consider the following 261-residue polypeptide: Chanoclavine-I dehydrogenase easD (261 aa).

The NADP(+) site is built by Ile-18, Lys-48, Asp-66, Arg-132, Tyr-166, Lys-170, and Thr-201. Residue Tyr-166 is the Proton donor of the active site. Lys-170 (lowers pKa of active site Tyr) is an active-site residue.

This sequence belongs to the short-chain dehydrogenases/reductases (SDR) family.

The enzyme catalyses chanoclavine-I + NAD(+) = chanoclavine-I aldehyde + NADH + H(+). It participates in alkaloid biosynthesis; ergot alkaloid biosynthesis. In terms of biological role, chanoclavine-I dehydrogenase; part of the gene cluster that mediates the biosynthesis of fumiclavanine C, a fungal ergot alkaloid. DmaW catalyzes the first step of ergot alkaloid biosynthesis by condensing dimethylallyl diphosphate (DMAP) and tryptophan to form 4-dimethylallyl-L-tryptophan. The second step is catalyzed by the methyltransferase easF that methylates 4-dimethylallyl-L-tryptophan in the presence of S-adenosyl-L-methionine, resulting in the formation of 4-dimethylallyl-L-abrine. The catalase easC and the FAD-dependent oxidoreductase easE then transform 4-dimethylallyl-L-abrine to chanoclavine-I which is further oxidized by EasD in the presence of NAD(+), resulting in the formation of chanoclavine-I aldehyde. EasA reduces chanoclavine-I aldehyde to dihydrochanoclavine-I aldehyde that spontaneously dehydrates to form 6,8-dimethyl-6,7-didehydroergoline. EasG then catalyzes the reduction of 6,8-dimethyl-6,7-didehydroergoline to form festuclavine. Hydrolysis of festuclavine by easM then leads to the formation of fumigaclavine B which is in turn acetylated by easN to fumigaclavine A. Finally, easL catalyzes the conversion of fumigaclavine A into fumigaclavine C by attaching a dimethylallyl moiety to C-2 of the indole nucleus. The chain is Chanoclavine-I dehydrogenase easD from Aspergillus fumigatus (strain ATCC MYA-4609 / CBS 101355 / FGSC A1100 / Af293) (Neosartorya fumigata).